Here is a 258-residue protein sequence, read N- to C-terminus: MHTTLKTRTVGSGPNFVLLHGWGVNSGVWQPIAKQLEQHFSVTYVDLPGFGENNQIMPKPYDLKNLAECVANVLPENSVLAGWSLGGLVAQHVALLEPTNVKQLILIATSPKFQKGNDWAGIDPNILQAFSQQLVKNLSKTIERFLAIQAMGSDSAKTDIRKIKNSIEASPQADIAALTAGLDILEHVDLRDQIAALKMPIHWMLGRLDSLVPVKLQGYVQRSLAKNHSVTIFPHASHAPFISHTEDFLIDLMENTLR.

Residues W22, 84–85, and 145–149 contribute to the substrate site; these read SL and FLAIQ. S84 serves as the catalytic Nucleophile. Residues D209 and H238 contribute to the active site. H238 contacts substrate.

The protein belongs to the AB hydrolase superfamily. Carboxylesterase BioH family. As to quaternary structure, monomer.

It is found in the cytoplasm. The catalysed reaction is 6-carboxyhexanoyl-[ACP] methyl ester + H2O = 6-carboxyhexanoyl-[ACP] + methanol + H(+). The protein operates within cofactor biosynthesis; biotin biosynthesis. Its function is as follows. The physiological role of BioH is to remove the methyl group introduced by BioC when the pimeloyl moiety is complete. It allows to synthesize pimeloyl-ACP via the fatty acid synthetic pathway through the hydrolysis of the ester bonds of pimeloyl-ACP esters. The protein is Pimeloyl-[acyl-carrier protein] methyl ester esterase of Pseudoalteromonas atlantica (strain T6c / ATCC BAA-1087).